Reading from the N-terminus, the 156-residue chain is Cyclic pyranopterin monophosphate synthase (156 aa).

Substrate is bound by residues 75-77 and 111-112; these read LCH and ME. D126 is an active-site residue.

This sequence belongs to the MoaC family. In terms of assembly, homohexamer; trimer of dimers.

The enzyme catalyses (8S)-3',8-cyclo-7,8-dihydroguanosine 5'-triphosphate = cyclic pyranopterin phosphate + diphosphate. It functions in the pathway cofactor biosynthesis; molybdopterin biosynthesis. Functionally, catalyzes the conversion of (8S)-3',8-cyclo-7,8-dihydroguanosine 5'-triphosphate to cyclic pyranopterin monophosphate (cPMP). The polypeptide is Cyclic pyranopterin monophosphate synthase (Caulobacter sp. (strain K31)).